Here is a 241-residue protein sequence, read N- to C-terminus: Ribonuclease PH (241 aa).

Phosphate is bound by residues Arg87 and 125–127 (GTR).

Belongs to the RNase PH family. In terms of assembly, homohexameric ring arranged as a trimer of dimers.

It carries out the reaction tRNA(n+1) + phosphate = tRNA(n) + a ribonucleoside 5'-diphosphate. In terms of biological role, phosphorolytic 3'-5' exoribonuclease that plays an important role in tRNA 3'-end maturation. Removes nucleotide residues following the 3'-CCA terminus of tRNAs; can also add nucleotides to the ends of RNA molecules by using nucleoside diphosphates as substrates, but this may not be physiologically important. Probably plays a role in initiation of 16S rRNA degradation (leading to ribosome degradation) during starvation. The sequence is that of Ribonuclease PH from Nitrosomonas europaea (strain ATCC 19718 / CIP 103999 / KCTC 2705 / NBRC 14298).